Reading from the N-terminus, the 178-residue chain is Large ribosomal subunit protein uL6 (178 aa).

The protein belongs to the universal ribosomal protein uL6 family. In terms of assembly, part of the 50S ribosomal subunit.

Its function is as follows. This protein binds to the 23S rRNA, and is important in its secondary structure. It is located near the subunit interface in the base of the L7/L12 stalk, and near the tRNA binding site of the peptidyltransferase center. This Streptococcus agalactiae serotype V (strain ATCC BAA-611 / 2603 V/R) protein is Large ribosomal subunit protein uL6.